Reading from the N-terminus, the 1010-residue chain is Outer kinetochore KNL1 complex subunit knl-1 (1010 aa).

A run of 9 repeats spans residues 85 to 88 (MDIS), 109 to 112 (MDMS), 228 to 231 (MDTS), 255 to 258 (MDIT), 278 to 281 (MDIS), 323 to 326 (MDIT), 346 to 349 (MDIS), 402 to 405 (MDIT), and 428 to 431 (MDIS). The segment at 85–431 (MDISESPACT…LQKEDLMDIS (347 aa)) is 9 X 4 AA repeats of M-[D/E]-[I/L/M]-[S/T]. Coiled-coil stretches lie at residues 820–915 (RIVE…GLDK) and 956–988 (KALR…KFAQ).

Component of the KNL1 complex composed of knl-1 and kbp-5. Part of the ten-subunit outer kinetochore KMN network that includes the KNL1, MIS12 and NDC80 complexes. Interacts with the protein phosphatase 1 (PP1) catalytic subunit gsp-1; the interaction is direct. Interacts with the protein phosphatase 1 (PP1) catalytic subunit gsp-2; the interaction is direct. Interacts with the MIS12 complex subunits kbp-1, kbp-2 and mis-12. Interacts with the NDC80 complex components ndc-80 and him-10. Interacts with knl-3. Interacts with kbp-3. Interacts with kbp-4. Interacts with kbp-5.

It is found in the cytoplasm. The protein resides in the cell cortex. The protein localises to the chromosome. It localises to the centromere. Its subcellular location is the kinetochore. In terms of biological role, acts as a component of the outer kinetochore KNL1 complex that serves as a docking point for spindle assembly checkpoint components and mediates microtubule-kinetochore interactions. Kinetochores, consisting of a centromere-associated inner segment and a microtubule-contacting outer segment, play a crucial role in chromosome segregation by mediating the physical connection between centromeric DNA and spindle microtubules. The outer kinetochore is made up of the ten-subunit KMN network, comprising the MIS12, NDC80 and KNL1 complexes, and auxiliary microtubule-associated components; together they connect the outer kinetochore with the inner kinetochore, bind microtubules, and mediate interactions with mitotic checkpoint proteins that delay anaphase until chromosomes are bioriented on the spindle. Binds the protein phosphatase 1 catalytic subunits gsp-1 and gsp-2, which has a role in delaying formation of load-bearing kinetochore-microtubule attachments. Required for the recruitment of spindle-assembly checkpoint components bub-1 and mdf-1/2 to unattached kinetochores. Binds microtubules which plays a role in silencing of the spindle assembly checkpoint, but not the formation of load-bearing microtubule-kinetochore attachments. Has a role in the correct localization of the spindly-like protein spdl-1 and the RZZ complex that is composed of rod-1, czw-1 and zwl-1 to kinetochores. The polypeptide is Outer kinetochore KNL1 complex subunit knl-1 (knl-1) (Caenorhabditis elegans).